The chain runs to 1036 residues: Presequence protease, mitochondrial (1036 aa).

Residues 1-15 constitute a mitochondrion transit peptide; sequence MWRFSGRRGLCAVQR. Zn(2+) is bound at residue H104. E107 serves as the catalytic Proton acceptor. H108 and E205 together coordinate Zn(2+). C119 and C556 form a disulfide bridge. Residue K759 is modified to N6-acetyllysine. K770 bears the N6-acetyllysine; alternate mark. K770 carries the N6-succinyllysine; alternate modification. The disordered stretch occupies residues 806–833; sequence SKKERKPVRPHIVEKPTPSGPSGAAHVS. Residue K848 is modified to N6-succinyllysine. K883 carries the post-translational modification N6-acetyllysine. K945 is modified (N6-succinyllysine).

It belongs to the peptidase M16 family. PreP subfamily. As to quaternary structure, monomer and homodimer; homodimerization is induced by binding of the substrate. Zn(2+) is required as a cofactor. In terms of processing, a disulfide bond locks the enzyme in the closed conformation preventing substrate entry into the catalytic chamber.

It localises to the mitochondrion matrix. Mainly exists in a closed and catalytically competent conformation but a closed-to-open switch allows substrate entry into the catalytic chamber. Substrate binding induces closure and dimerization. A disulfide bond may lock the enzyme in a closed conformation preventing substrate entry into the catalytic chamber, participating in redox regulation of the enzyme. Inhibited by metal-chelating agents. Inhibited by nickel and zinc excess, and slightly activated by manganese. Metalloendopeptidase of the mitochondrial matrix that functions in peptide cleavage and degradation rather than in protein processing. Has an ATP-independent activity. Specifically cleaves peptides in the range of 5 to 65 residues. Shows a preference for cleavage after small polar residues and before basic residues, but without any positional preference. Degrades the transit peptides of mitochondrial proteins after their cleavage. Also degrades other unstructured peptides. It is also able to degrade amyloid-beta protein 40, one of the peptides produced by APP processing, when it accumulates in mitochondrion. It is a highly efficient protease, at least toward amyloid-beta protein 40. Cleaves that peptide at a specific position and is probably not processive, releasing digested peptides intermediates that can be further cleaved subsequently. It is also able to degrade amyloid-beta protein 42. This chain is Presequence protease, mitochondrial, found in Mus musculus (Mouse).